The primary structure comprises 150 residues: Arginine repressor (150 aa).

It belongs to the ArgR family.

It is found in the cytoplasm. The protein operates within amino-acid biosynthesis; L-arginine biosynthesis [regulation]. Functionally, regulates arginine biosynthesis genes. The protein is Arginine repressor of Clostridium acetobutylicum (strain ATCC 824 / DSM 792 / JCM 1419 / IAM 19013 / LMG 5710 / NBRC 13948 / NRRL B-527 / VKM B-1787 / 2291 / W).